The sequence spans 217 residues: Small ribosomal subunit protein uS3c (217 aa).

A KH type-2 domain is found at 39 to 109 (IRNFLRTKLI…RFRITITYIP (71 aa)).

The protein belongs to the universal ribosomal protein uS3 family. Part of the 30S ribosomal subunit.

It localises to the plastid. Its subcellular location is the chloroplast. In Chlorokybus atmophyticus (Soil alga), this protein is Small ribosomal subunit protein uS3c (rps3).